Here is a 457-residue protein sequence, read N- to C-terminus: UDP-N-acetylmuramate--L-alanine ligase (457 aa).

118–124 (GTHGKTT) provides a ligand contact to ATP.

This sequence belongs to the MurCDEF family.

The protein localises to the cytoplasm. The enzyme catalyses UDP-N-acetyl-alpha-D-muramate + L-alanine + ATP = UDP-N-acetyl-alpha-D-muramoyl-L-alanine + ADP + phosphate + H(+). The protein operates within cell wall biogenesis; peptidoglycan biosynthesis. Cell wall formation. This chain is UDP-N-acetylmuramate--L-alanine ligase, found in Clostridium perfringens (strain 13 / Type A).